Here is a 457-residue protein sequence, read N- to C-terminus: MDHLPIFCQLRDRDCLIVGGGDVAERKARLLLEAGARLTVNALTFIPQFTVWADEGMLTLVEGPFDEALLDPCWLAIAATDDDAVNQHVSEAAESRRIFCNVVDAPKAASFIMPSIIDRSPLMVAVSSGGTSPVLARLLREKLESILPQHLGQVAQYAGQLRARVKKQFITMGERRRFWEKFFVNDRLAQSLANADEKAVNATTEQLFSEPLDHRGEVVLVGAGPGDAGLLTLKGLQQIQQADIVVYDRLVSDDIMNLVRRDADRVFVGKRAGYHCVPQEEINQILLREAQKGKRVVRLKGGDPFIFGRGGEELETLCHAGIPFSVVPGITAASGCSAYSGLPLTHRDYAQSVRLVTGHLKTGGELDWENLAAEKQTLVFYMGLNQAATIQEKLIAFGMQADMPVALVENGTSIKQRVVNGELAQLGELAKQVASPALIIVGRVVGLRDKLNWFSSH.

Residues Met-1 to Thr-204 are precorrin-2 dehydrogenase /sirohydrochlorin ferrochelatase. NAD(+)-binding positions include Asp-22–Val-23 and Leu-43–Thr-44. Ser-128 carries the post-translational modification Phosphoserine. The segment at Gly-216–His-457 is uroporphyrinogen-III C-methyltransferase. Position 225 (Pro-225) interacts with S-adenosyl-L-methionine. The Proton acceptor role is filled by Asp-248. The active-site Proton donor is Lys-270. S-adenosyl-L-methionine-binding positions include Gly-301–Asp-303, Ile-306, Thr-331–Ala-332, Met-382, and Gly-411.

The protein in the N-terminal section; belongs to the precorrin-2 dehydrogenase / sirohydrochlorin ferrochelatase family. This sequence in the C-terminal section; belongs to the precorrin methyltransferase family.

It carries out the reaction uroporphyrinogen III + 2 S-adenosyl-L-methionine = precorrin-2 + 2 S-adenosyl-L-homocysteine + H(+). It catalyses the reaction precorrin-2 + NAD(+) = sirohydrochlorin + NADH + 2 H(+). The catalysed reaction is siroheme + 2 H(+) = sirohydrochlorin + Fe(2+). It functions in the pathway cofactor biosynthesis; adenosylcobalamin biosynthesis; precorrin-2 from uroporphyrinogen III: step 1/1. Its pathway is cofactor biosynthesis; adenosylcobalamin biosynthesis; sirohydrochlorin from precorrin-2: step 1/1. The protein operates within porphyrin-containing compound metabolism; siroheme biosynthesis; precorrin-2 from uroporphyrinogen III: step 1/1. It participates in porphyrin-containing compound metabolism; siroheme biosynthesis; siroheme from sirohydrochlorin: step 1/1. It functions in the pathway porphyrin-containing compound metabolism; siroheme biosynthesis; sirohydrochlorin from precorrin-2: step 1/1. In terms of biological role, multifunctional enzyme that catalyzes the SAM-dependent methylations of uroporphyrinogen III at position C-2 and C-7 to form precorrin-2 via precorrin-1. Then it catalyzes the NAD-dependent ring dehydrogenation of precorrin-2 to yield sirohydrochlorin. Finally, it catalyzes the ferrochelation of sirohydrochlorin to yield siroheme. The protein is Siroheme synthase of Salmonella arizonae (strain ATCC BAA-731 / CDC346-86 / RSK2980).